The following is a 407-amino-acid chain: Peptidase T (407 aa).

Histidine 78 is a Zn(2+) binding site. Aspartate 80 is a catalytic residue. Aspartate 139 lines the Zn(2+) pocket. Glutamate 173 (proton acceptor) is an active-site residue. Positions 174, 196, and 378 each coordinate Zn(2+).

It belongs to the peptidase M20B family. Requires Zn(2+) as cofactor.

It localises to the cytoplasm. It catalyses the reaction Release of the N-terminal residue from a tripeptide.. In terms of biological role, cleaves the N-terminal amino acid of tripeptides. This Shewanella pealeana (strain ATCC 700345 / ANG-SQ1) protein is Peptidase T.